A 252-amino-acid chain; its full sequence is Gastrula zinc finger protein XlCGF28.1 (252 aa).

9 C2H2-type zinc fingers span residues 6 to 28 (FTCN…LRSH), 34 to 56 (FTCS…FRGH), 62 to 84 (SACT…IRSH), 90 to 112 (YTCT…VRSH), 118 to 140 (FKCT…LRFH), 146 to 168 (TTCS…FRVH), 174 to 196 (FTCT…SYLH), 202 to 224 (YTCT…SYLH), and 230 to 252 (FTCT…SHTH).

The protein belongs to the krueppel C2H2-type zinc-finger protein family.

It is found in the nucleus. In terms of biological role, may be involved in transcriptional regulation. This chain is Gastrula zinc finger protein XlCGF28.1, found in Xenopus laevis (African clawed frog).